Consider the following 338-residue polypeptide: DNA-directed RNA polymerase subunit alpha (338 aa).

The segment at 1-234 (MIHKNWAELI…DQLSIFVNFE (234 aa)) is alpha N-terminal domain (alpha-NTD). Residues 250–338 (FNPLLLKKVD…DLAKRFEDQF (89 aa)) form an alpha C-terminal domain (alpha-CTD) region.

Belongs to the RNA polymerase alpha chain family. In terms of assembly, homodimer. The RNAP catalytic core consists of 2 alpha, 1 beta, 1 beta' and 1 omega subunit. When a sigma factor is associated with the core the holoenzyme is formed, which can initiate transcription.

It catalyses the reaction RNA(n) + a ribonucleoside 5'-triphosphate = RNA(n+1) + diphosphate. Functionally, DNA-dependent RNA polymerase catalyzes the transcription of DNA into RNA using the four ribonucleoside triphosphates as substrates. The chain is DNA-directed RNA polymerase subunit alpha from Cereibacter sphaeroides (strain ATCC 17029 / ATH 2.4.9) (Rhodobacter sphaeroides).